We begin with the raw amino-acid sequence, 106 residues long: Ribonuclease P protein component 4 (106 aa).

Zn(2+) is bound by residues C57, C60, C83, and C86.

Belongs to the eukaryotic/archaeal RNase P protein component 4 family. As to quaternary structure, consists of a catalytic RNA component and at least 4-5 protein subunits. The cofactor is Zn(2+).

Its subcellular location is the cytoplasm. It carries out the reaction Endonucleolytic cleavage of RNA, removing 5'-extranucleotides from tRNA precursor.. Part of ribonuclease P, a protein complex that generates mature tRNA molecules by cleaving their 5'-ends. This is Ribonuclease P protein component 4 from Saccharolobus solfataricus (strain ATCC 35092 / DSM 1617 / JCM 11322 / P2) (Sulfolobus solfataricus).